The following is a 135-amino-acid chain: MKPSERRKARRLAVQAIYSWQLSGNNIADVEHEFLTEQNVDGVDIAYFRELLGGVATKKSQLDELITPFLVRPMDEVDPVEKAIVRLAAYELTFRKDVPYKVAINEAIELAKAFGAEDGHKFVNGILDKLVARTK.

The protein belongs to the NusB family.

Functionally, involved in transcription antitermination. Required for transcription of ribosomal RNA (rRNA) genes. Binds specifically to the boxA antiterminator sequence of the ribosomal RNA (rrn) operons. The sequence is that of Transcription antitermination protein NusB from Shewanella piezotolerans (strain WP3 / JCM 13877).